Here is a 188-residue protein sequence, read N- to C-terminus: dCTP deaminase (188 aa).

109–114 (KSTYAR) serves as a coordination point for dCTP. Glu-135 acts as the Proton donor/acceptor in catalysis. DCTP-binding residues include Gln-154, Tyr-168, and Gln-178.

This sequence belongs to the dCTP deaminase family. Homotrimer.

It catalyses the reaction dCTP + H2O + H(+) = dUTP + NH4(+). Its pathway is pyrimidine metabolism; dUMP biosynthesis; dUMP from dCTP (dUTP route): step 1/2. Its function is as follows. Catalyzes the deamination of dCTP to dUTP. This chain is dCTP deaminase, found in Helicobacter hepaticus (strain ATCC 51449 / 3B1).